The primary structure comprises 327 residues: MVREKVKVSTRTLQWKCVESRRDSKRLYYGRFILSPLMKGQADTIGIAMRRALLGEIEGTCITRAKSENIPHDYSNIVGIQESVHEILMNLNEIVLRSNLYGTRNALICVQGPGYITARDIILPPSVEIIDNTQHIATLTEPIDLCIELKIERNRGYSLKMSNNFEDRSYPIDAVFMPVQNANHSIHSYGNGNEKQEILFLEIWTNGSLTPKEALHEASRNLINLFIPFLHVEEETVYLENNQHQVTLPFFPFHNRLVNLRKKKKELAFQYIFIDQLELPPRIYNCLKKSNIHTLLDLLNNSQEDLIKIEHFHIEDVKKILDILEKK.

Residues 1–233 (MVREKVKVST…NLFIPFLHVE (233 aa)) are alpha N-terminal domain (alpha-NTD). An alpha C-terminal domain (alpha-CTD) region spans residues 265 to 327 (KELAFQYIFI…KKILDILEKK (63 aa)).

It belongs to the RNA polymerase alpha chain family. In terms of assembly, in plastids the minimal PEP RNA polymerase catalytic core is composed of four subunits: alpha, beta, beta', and beta''. When a (nuclear-encoded) sigma factor is associated with the core the holoenzyme is formed, which can initiate transcription.

The protein resides in the plastid. Its subcellular location is the chloroplast. The catalysed reaction is RNA(n) + a ribonucleoside 5'-triphosphate = RNA(n+1) + diphosphate. Functionally, DNA-dependent RNA polymerase catalyzes the transcription of DNA into RNA using the four ribonucleoside triphosphates as substrates. This chain is DNA-directed RNA polymerase subunit alpha, found in Olimarabidopsis pumila (Dwarf rocket).